The sequence spans 75 residues: Exodeoxyribonuclease 7 small subunit (75 aa).

The protein belongs to the XseB family. In terms of assembly, heterooligomer composed of large and small subunits.

The protein localises to the cytoplasm. The enzyme catalyses Exonucleolytic cleavage in either 5'- to 3'- or 3'- to 5'-direction to yield nucleoside 5'-phosphates.. Its function is as follows. Bidirectionally degrades single-stranded DNA into large acid-insoluble oligonucleotides, which are then degraded further into small acid-soluble oligonucleotides. This chain is Exodeoxyribonuclease 7 small subunit, found in Chlamydia caviae (strain ATCC VR-813 / DSM 19441 / 03DC25 / GPIC) (Chlamydophila caviae).